The chain runs to 474 residues: Glutamate--tRNA ligase (474 aa).

Residues 9 to 19 carry the 'HIGH' region motif; the sequence is PSPTGFLHVGG. Positions 240 to 244 match the 'KMSKS' region motif; the sequence is KLSKR. Residue Lys-243 coordinates ATP.

It belongs to the class-I aminoacyl-tRNA synthetase family. Glutamate--tRNA ligase type 1 subfamily. As to quaternary structure, monomer.

The protein localises to the cytoplasm. It carries out the reaction tRNA(Glu) + L-glutamate + ATP = L-glutamyl-tRNA(Glu) + AMP + diphosphate. In terms of biological role, catalyzes the attachment of glutamate to tRNA(Glu) in a two-step reaction: glutamate is first activated by ATP to form Glu-AMP and then transferred to the acceptor end of tRNA(Glu). The protein is Glutamate--tRNA ligase of Photobacterium profundum (strain SS9).